Reading from the N-terminus, the 232-residue chain is Orotidine 5'-phosphate decarboxylase (232 aa).

Substrate is bound by residues Asp-13, Lys-35, 62–71 (DLKFHDIPNT), Thr-122, Arg-182, Gln-191, Gly-211, and Arg-212. The Proton donor role is filled by Lys-64.

This sequence belongs to the OMP decarboxylase family. Type 1 subfamily. In terms of assembly, homodimer.

It catalyses the reaction orotidine 5'-phosphate + H(+) = UMP + CO2. Its pathway is pyrimidine metabolism; UMP biosynthesis via de novo pathway; UMP from orotate: step 2/2. Functionally, catalyzes the decarboxylation of orotidine 5'-monophosphate (OMP) to uridine 5'-monophosphate (UMP). The protein is Orotidine 5'-phosphate decarboxylase of Pseudomonas syringae pv. syringae (strain B728a).